Here is an 878-residue protein sequence, read N- to C-terminus: Splicing factor 3B subunit 2 (878 aa).

Residues 1-10 (MAAEHPEPPK) are compositionally biased toward basic and acidic residues. Disordered stretches follow at residues 1 to 25 (MAAEHPEPPKGELQLPPPPPPGHYG) and 67 to 136 (RPVL…LRVG). A Glycyl lysine isopeptide (Lys-Gly) (interchain with G-Cter in SUMO2) cross-link involves residue K10. Positions 24 to 58 (YGAWAAQELQARLAEIGAPIQGSREELVERLQTYT) constitute an SAP domain. 2 stretches are compositionally biased toward pro residues: residues 91 to 114 (PMPPPPMGLPPLQPPPPPPPPPPG) and 122 to 133 (AHPPNLGPPPPL). Residues 140–177 (ALSEEERLKLAQQQAALLMQQEERAKQAAVLMEQERQQ) are a coiled coil. Disordered stretches follow at residues 183 to 356 (GTAV…EYVT) and 383 to 436 (KKEK…SKKK). Positions 201–221 (PLGPRVAAPVGPVVPTPTVLP) are enriched in low complexity. Residues R205, R228, and R230 each carry the omega-N-methylarginine modification. The span at 224–237 (APVPRPRGPPPPPG) shows a compositional bias: pro residues. N6-acetyllysine is present on K258. A compositionally biased stretch (basic and acidic residues) spans 260–269 (LQLKESRQEE). A Glycyl lysine isopeptide (Lys-Gly) (interchain with G-Cter in SUMO2) cross-link involves residue K263. Position 272 is a phosphoserine (S272). T281 carries the post-translational modification Phosphothreonine. A phosphoserine mark is found at S290 and S292. Position 294 is a phosphothreonine (T294). Phosphoserine is present on S300. Residues 305 to 321 (EKNRKRRNRKKKKKPQR) show a composition bias toward basic residues. Basic and acidic residues predominate over residues 330–342 (SGDREKDSGRSRG). S343 bears the Phosphoserine mark. Glycyl lysine isopeptide (Lys-Gly) (interchain with G-Cter in SUMO2) cross-links involve residues K383 and K395. 2 stretches are compositionally biased toward basic and acidic residues: residues 383–397 (KKEKEKEPEKLDKME) and 405–414 (KGFEEEHKDS). The segment at 384 to 533 (KEKEKEPEKL…QEKEEQKTMK (150 aa)) is required for interaction with PRMT9. S414, S418, and S419 each carry phosphoserine. Residue K475 forms a Glycyl lysine isopeptide (Lys-Gly) (interchain with G-Cter in SUMO2) linkage. R491 and R498 each carry omega-N-methylarginine. R491 carries the symmetric dimethylarginine modification. A Glycyl lysine isopeptide (Lys-Gly) (interchain with G-Cter in SUMO2) cross-link involves residue K526. Residues 674–740 (AAEFQTKTEE…PGGFSSVPAG (67 aa)) are disordered. Positions 695 to 715 (EPSDEESSEEEEEEESDEDKP) are enriched in acidic residues. K753 is covalently cross-linked (Glycyl lysine isopeptide (Lys-Gly) (interchain with G-Cter in SUMO2)). T763 is subject to Phosphothreonine. Glycyl lysine isopeptide (Lys-Gly) (interchain with G-Cter in SUMO2) cross-links involve residues K773, K826, and K840. Over residues 827-852 (YEEHVREQQAQVEKEDFSDMVAEHAA) the composition is skewed to basic and acidic residues. The disordered stretch occupies residues 827 to 878 (YEEHVREQQAQVEKEDFSDMVAEHAAKQKQKKRKAQPQDSRGGSKKYKEFKF). S844 bears the Phosphoserine mark.

As to quaternary structure, component of the 17S U2 SnRNP complex, a ribonucleoprotein complex that contains small nuclear RNA (snRNA) U2 and a number of specific proteins. Part of the SF3B subcomplex of the 17S U2 SnRNP complex. SF3B associates with the splicing subcomplex SF3A and a 12S RNA unit to form the U2 small nuclear ribonucleoproteins complex (U2 snRNP). Within the SF3B complex, interacts directly with SF3B4. Found in a complex with PRMT9, SF3B2 and SF3B4. Interacts (Arg-491-methylated form) with SMN1 (via Tudor domain). Interacts with RBM7. Interacts with ERCC6. Component of the minor spliceosome. Within this complex, interacts with SCNM1 and CRIPT. Methylation at Arg-491 by PRMT9 is required for the interaction with SMN1.

It is found in the nucleus. The protein localises to the nucleus speckle. In terms of biological role, component of the 17S U2 SnRNP complex of the spliceosome, a large ribonucleoprotein complex that removes introns from transcribed pre-mRNAs. The 17S U2 SnRNP complex (1) directly participates in early spliceosome assembly and (2) mediates recognition of the intron branch site during pre-mRNA splicing by promoting the selection of the pre-mRNA branch-site adenosine, the nucleophile for the first step of splicing. Within the 17S U2 SnRNP complex, SF3B2 is part of the SF3B subcomplex, which is required for 'A' complex assembly formed by the stable binding of U2 snRNP to the branchpoint sequence in pre-mRNA. Sequence independent binding of SF3A and SF3B subcomplexes upstream of the branch site is essential, it may anchor U2 snRNP to the pre-mRNA. May also be involved in the assembly of the 'E' complex. Also acts as a component of the minor spliceosome, which is involved in the splicing of U12-type introns in pre-mRNAs. The polypeptide is Splicing factor 3B subunit 2 (Mus musculus (Mouse)).